Here is a 330-residue protein sequence, read N- to C-terminus: Probable deoxyhypusine synthase (330 aa).

The active-site Nucleophile is K303.

It belongs to the deoxyhypusine synthase family. Requires NAD(+) as cofactor.

It catalyses the reaction [eIF5A protein]-L-lysine + spermidine = [eIF5A protein]-deoxyhypusine + propane-1,3-diamine. The protein operates within protein modification; eIF5A hypusination. Catalyzes the NAD-dependent oxidative cleavage of spermidine and the subsequent transfer of the butylamine moiety of spermidine to the epsilon-amino group of a specific lysine residue of the eIF-5A precursor protein to form the intermediate deoxyhypusine residue. This Methanocaldococcus jannaschii (strain ATCC 43067 / DSM 2661 / JAL-1 / JCM 10045 / NBRC 100440) (Methanococcus jannaschii) protein is Probable deoxyhypusine synthase (dys).